The primary structure comprises 468 residues: Heparan-sulfate 6-O-sulfotransferase 2 (468 aa).

Over 1-9 (MDGKSNYSR) the chain is Cytoplasmic. Residues 10–30 (LLIALLMILFFGGIVLQYICS) traverse the membrane as a helical; Signal-anchor for type II membrane protein segment. The Lumenal segment spans residues 31-468 (TSDWQLLHLA…DYLENVEQWR (438 aa)). Residue asparagine 79 is glycosylated (N-linked (GlcNAc...) asparagine). 103 to 111 (HIQKTGGTT) serves as a coordination point for 3'-phosphoadenylyl sulfate. Residues 133–134 (KK), arginine 150, tryptophan 155, and histidine 160 each bind substrate. The active-site Proton acceptor is histidine 160. 3'-phosphoadenylyl sulfate-binding residues include arginine 197 and serine 205. Substrate contacts are provided by histidine 209 and tryptophan 216. Asparagine 276 is a glycosylation site (N-linked (GlcNAc...) asparagine). 329–331 (TQL) serves as a coordination point for 3'-phosphoadenylyl sulfate. Asparagine 332 is a glycosylation site (N-linked (GlcNAc...) asparagine). 335–336 (RA) lines the 3'-phosphoadenylyl sulfate pocket. Positions 409-447 (FKPTKEPPMTEQSPAFAEEKQADAERTLESETEGQVEEN) are disordered. Residues 425 to 437 (AEEKQADAERTLE) show a composition bias toward basic and acidic residues. Acidic residues predominate over residues 438 to 447 (SETEGQVEEN).

The protein belongs to the sulfotransferase 6 family. In terms of tissue distribution, expressed ubiquitously during gastrulation. During early somitogenesis, strong expression in head and presumptive brain. During mid-somitogenesis, strong expression in eye, hindbrain and somitic boundaries and weak expression in tail bud. During late somitogenesis, strong expression in eye, hindbrain, branchial arch primordia, spinal cord and ventral medial somites. At 24 hours post-fertilization (hpf), strong expression throughout the head, with expression receeding from the trunk spinal cord, ventral medial somites and somitic boundaries; expressed in cells surrounding vascular structures of the dorsal aorta and caudal vein in the tail. At 36 hpf, expressed in lens, optic stalk, hindbrain and pectoral fin. At 48 hpf, expressed in eye, brain, otic vesicle and branchial arches.

It localises to the membrane. The catalysed reaction is alpha-D-glucosaminyl-[heparan sulfate](n) + 3'-phosphoadenylyl sulfate = 6-sulfo-alpha-D-glucosaminyl-[heparan sulfate](n) + adenosine 3',5'-bisphosphate + H(+). 6-O-sulfation enzyme which catalyzes the transfer of sulfate from 3'-phosphoadenosine 5'-phosphosulfate (PAPS) to position 6 of the N-sulfoglucosamine residue (GlcNS) of heparan sulfate. Required for muscle development and angiogenesis. This chain is Heparan-sulfate 6-O-sulfotransferase 2 (hs6st2), found in Danio rerio (Zebrafish).